A 617-amino-acid chain; its full sequence is Erythritol-mannosyl-transferase 1 (617 aa).

Disordered stretches follow at residues 365 to 396 (RNPGSPGFTSPLNSPTAVATPKWDEKRPIDSR) and 567 to 617 (RQRK…VTNP). A compositionally biased stretch (polar residues) spans 371 to 381 (GFTSPLNSPTA). Residues 386–396 (KWDEKRPIDSR) show a composition bias toward basic and acidic residues. Residues 578–603 (TAKTSLSVDTTEVATPTFTDTETSLS) are compositionally biased toward polar residues.

It belongs to the UDP-glycosyltransferase family.

It functions in the pathway secondary metabolite biosynthesis. In terms of biological role, glycosyltransferase; part of the gene cluster that mediates the biosynthesis of mannosylerythritol lipids (MELs), surface-active substances that enhance the availability of water-insoluble substrates. Depending on the number of acetyl groups, mannosylerythritol lipids can be differentiated into MEL A (fully acetylated), MEL B and MEL C (monoacetylated at R-6 and R-4, respectively), and the fully deacetylated MEL D. The first step in the pathway is the generation of mannosylerythritol by the glycosyltransferase EMT1 which catalyzes the transfer of GDP-mannose to the C-4 atom of meso-erythritol. This reaction has to be stereospecific, since only mannosyl-D-erythritol is generated. The produced disaccharide is subsequently acylated with fatty acids of various lengths by the acyltransferases MAC1 and MAC2 at positions C-2 and C-3, repectively. The existence of MEL derivatives which carry an acetyl group at C-2 implies that at least MAC1 also accepts acetyl-CoA as a donor. The final step of MEL biosynthesis is the acetylation of the fully acylated mannosylerythritol lipids catalyzed by the acetyl-CoA-dependent acetyltransferase MAT1. MAT1 displays a relaxed regioselectivity and is able to transfer acetylgroups to both positions C-4 and C-6 of the mannosyl moiety. This is Erythritol-mannosyl-transferase 1 from Pseudozyma antarctica (strain T-34) (Yeast).